We begin with the raw amino-acid sequence, 202 residues long: Holliday junction branch migration complex subunit RuvA (202 aa).

Positions 1 to 65 (MIGYLEGRVV…EDALELFGFA (65 aa)) are domain I. Residues 66 to 144 (SLDDRETFRT…GRAPAAGLAP (79 aa)) form a domain II region. The flexible linker stretch occupies residues 145 to 155 (SVPIPGGVAGD). Positions 155–202 (DVVAGLTNLGYPEPEARQVAAEVLEAEPDLDVAAALRQALKRLASAKK) are domain III.

The protein belongs to the RuvA family. In terms of assembly, homotetramer. Forms an RuvA(8)-RuvB(12)-Holliday junction (HJ) complex. HJ DNA is sandwiched between 2 RuvA tetramers; dsDNA enters through RuvA and exits via RuvB. An RuvB hexamer assembles on each DNA strand where it exits the tetramer. Each RuvB hexamer is contacted by two RuvA subunits (via domain III) on 2 adjacent RuvB subunits; this complex drives branch migration. In the full resolvosome a probable DNA-RuvA(4)-RuvB(12)-RuvC(2) complex forms which resolves the HJ.

The protein resides in the cytoplasm. Its function is as follows. The RuvA-RuvB-RuvC complex processes Holliday junction (HJ) DNA during genetic recombination and DNA repair, while the RuvA-RuvB complex plays an important role in the rescue of blocked DNA replication forks via replication fork reversal (RFR). RuvA specifically binds to HJ cruciform DNA, conferring on it an open structure. The RuvB hexamer acts as an ATP-dependent pump, pulling dsDNA into and through the RuvAB complex. HJ branch migration allows RuvC to scan DNA until it finds its consensus sequence, where it cleaves and resolves the cruciform DNA. The protein is Holliday junction branch migration complex subunit RuvA of Solidesulfovibrio magneticus (strain ATCC 700980 / DSM 13731 / RS-1) (Desulfovibrio magneticus).